We begin with the raw amino-acid sequence, 514 residues long: MAREDASVPRSHDSADASPNSTAKEIPVPQPPLLNLNLNLNMNSGFNLSNWWHQITSIEADSSDDRNNNNSNNGINAAESDSAQSQPIVVLGHSYQTTEEAHEDIIKKLCLTYRYGFERIPRAVNGPSPLSFMQSVIFSKSLLYNLQNFNNFIEKENFTTDVGWGCMIRTSQSLLANTFVRLLDKQSDIIALFNDTYLAPFSLHNFIRVASSSPLKVKPGEWFGPNAASLSIKRLCDGYYDNSTSETILPRINVLISESTDLYDSQIAQLLEPSTETKGLLVLLPVRLGIDSINSYYFSSLLHLLSLEQSVGIAGGKPSSSFYFFGYQDNSLIYMDPHSAQIFSSDIDMSTYYATRYQRVDIGKLDPSMLIGVFIRDLTSYENFKKSCLDAANKIVHFHATERSTVPESRRKNSEFVNINRSDLKDEDYINIDRVNRLDSTDDFIDLGDDYVETNTNLEEATPSAEDTVPVSTLSASESEITTSSYETPTSKDDNSSRASLDVVVLDTTGEQQE.

The span at 1–15 shows a compositional bias: basic and acidic residues; the sequence is MAREDASVPRSHDSA. Disordered regions lie at residues 1 to 28 and 61 to 84; these read MARE…EIPV and DSSD…DSAQ. C166 (nucleophile) is an active-site residue. Residues D336 and H338 contribute to the active site. The interval 461–514 is disordered; that stretch reads ATPSAEDTVPVSTLSASESEITTSSYETPTSKDDNSSRASLDVVVLDTTGEQQE. Residues 472-489 show a composition bias toward low complexity; it reads STLSASESEITTSSYETP.

The protein belongs to the peptidase C54 family.

The protein localises to the cytoplasm. It localises to the nucleus. It is found in the preautophagosomal structure. The catalysed reaction is [protein]-C-terminal L-amino acid-glycyl-phosphatidylethanolamide + H2O = [protein]-C-terminal L-amino acid-glycine + a 1,2-diacyl-sn-glycero-3-phosphoethanolamine. Cysteine protease that plays a key role in cytoplasm to vacuole transport (Cvt) and autophagy by mediating both proteolytic activation and delipidation of ATG8. Required for selective autophagic degradation of the nucleus (nucleophagy) as well as for mitophagy which contributes to regulate mitochondrial quantity and quality by eliminating the mitochondria to a basal level to fulfill cellular energy requirements and preventing excess ROS production. The protease activity is required for proteolytic activation of ATG8: cleaves the C-terminal amino acid of ATG8 to reveal a C-terminal glycine. ATG8 ubiquitin-like activity requires the exposure of the glycine at the C-terminus for its conjugation to phosphatidylethanolamine (PE) and its insertion to membranes, which is necessary for autophagy. The ATG8-PE conjugate mediates tethering between adjacent membranes and stimulates membrane hemifusion, leading to expansion of the autophagosomal membrane during autophagy. In addition to the protease activity, also catalyzes deconjugation of PE-conjugated forms of ATG8 during macroautophagy: ATG8 delipidation is required to release the protein from membranes, which facilitates multiple events during macroautophagy, and especially for efficient autophagosome biogenesis, the assembly of ATG9-containing tubulovesicular clusters into phagophores/autophagosomes, and for the disassembly of PAS-associated ATG components. ATG8 delipidation by ATG4 also recycles ATG8-PE generated on inappropriate membranes to maintain a reservoir of unlipidated ATG8 that is required for autophagosome formation at the PAS. The chain is Probable cysteine protease ATG4 (ATG4) from Scheffersomyces stipitis (strain ATCC 58785 / CBS 6054 / NBRC 10063 / NRRL Y-11545) (Yeast).